A 428-amino-acid polypeptide reads, in one-letter code: Serine--tRNA ligase (428 aa).

235–237 (TAE) lines the L-serine pocket. 266-268 (RSE) lines the ATP pocket. E289 provides a ligand contact to L-serine. 353–356 (EISS) provides a ligand contact to ATP. L-serine is bound at residue S389.

The protein belongs to the class-II aminoacyl-tRNA synthetase family. Type-1 seryl-tRNA synthetase subfamily. As to quaternary structure, homodimer. The tRNA molecule binds across the dimer.

It is found in the cytoplasm. The enzyme catalyses tRNA(Ser) + L-serine + ATP = L-seryl-tRNA(Ser) + AMP + diphosphate + H(+). The catalysed reaction is tRNA(Sec) + L-serine + ATP = L-seryl-tRNA(Sec) + AMP + diphosphate + H(+). It functions in the pathway aminoacyl-tRNA biosynthesis; selenocysteinyl-tRNA(Sec) biosynthesis; L-seryl-tRNA(Sec) from L-serine and tRNA(Sec): step 1/1. Catalyzes the attachment of serine to tRNA(Ser). Is also able to aminoacylate tRNA(Sec) with serine, to form the misacylated tRNA L-seryl-tRNA(Sec), which will be further converted into selenocysteinyl-tRNA(Sec). This is Serine--tRNA ligase from Shewanella oneidensis (strain ATCC 700550 / JCM 31522 / CIP 106686 / LMG 19005 / NCIMB 14063 / MR-1).